The sequence spans 335 residues: Urokinase plasminogen activator surface receptor (335 aa).

A signal peptide spans Met1 to Gly22. 3 consecutive UPAR/Ly6 domains span residues Leu23–Tyr114, Leu115–Gly213, and His214–Gly305. Intrachain disulfides connect Cys25-Cys46, Cys28-Cys34, and Cys39-Cys67. A glycan (N-linked (GlcNAc...) asparagine) is linked at Asn74. Disulfide bonds link Cys93–Cys98, Cys117–Cys144, Cys120–Cys127, Cys137–Cys169, Cys175–Cys192, Cys193–Cys198, Cys216–Cys244, Cys219–Cys227, Cys237–Cys263, Cys269–Cys287, and Cys288–Cys293. N-linked (GlcNAc...) asparagine glycosylation is found at Asn184, Asn194, Asn222, Asn255, and Asn284. Gly305 is lipidated: GPI-anchor amidated glycine. A propeptide spans Ala306 to Thr335 (removed in mature form).

In terms of assembly, monomer. Interacts (via the UPAR/Ly6 domains) with SRPX2. Interacts with MRC2. Interacts with FAP (seprase); the interaction occurs at the cell surface of invadopodia membrane. Interacts with SORL1 (via N-terminal ectodomain); this interaction decreases PLAUR internalization. The ternary complex composed of PLAUR-PLAU-SERPINE1 also interacts with SORL1.

The protein localises to the cell membrane. The protein resides in the cell projection. Its subcellular location is the invadopodium membrane. Functionally, acts as a receptor for urokinase plasminogen activator. Plays a role in localizing and promoting plasmin formation. Mediates the proteolysis-independent signal transduction activation effects of U-PA. It is subject to negative-feedback regulation by U-PA which cleaves it into an inactive form. This is Urokinase plasminogen activator surface receptor (PLAUR) from Macaca fascicularis (Crab-eating macaque).